Reading from the N-terminus, the 469-residue chain is Probable glucuronoxylan glucuronosyltransferase F8H (469 aa).

Over M1–N36 the chain is Cytoplasmic. The chain crosses the membrane as a helical; Signal-anchor for type II membrane protein span at residues I37–L57. The Lumenal segment spans residues Y58–M469. 4 N-linked (GlcNAc...) asparagine glycosylation sites follow: N171, N203, N301, and N411.

It belongs to the glycosyltransferase 47 family. Expressed in xylem cells in stems and in roots.

The protein localises to the golgi apparatus membrane. In terms of biological role, involved in the synthesis of the hemicellulose glucuronoxylan, a major component of secondary cell walls. Probably involved in the synthesis of the glycosyl sequence at the glucuronoxylan reducing end. In Arabidopsis thaliana (Mouse-ear cress), this protein is Probable glucuronoxylan glucuronosyltransferase F8H (F8H).